The following is a 161-amino-acid chain: uncharacterized protein (161 aa).

Disordered stretches follow at residues 1 to 67 (MNSN…IQNF) and 80 to 147 (DSHQ…KKKQ). A compositionally biased stretch (low complexity) spans 84-126 (NFNDNGFNNNNNNNNSNMNHNFSNQNNYNNNNNNNNNNNSNFN). Polar residues predominate over residues 135–147 (GTSSQVGNNKKKQ).

This is an uncharacterized protein from Dictyostelium discoideum (Social amoeba).